A 239-amino-acid chain; its full sequence is Large ribosomal subunit protein uL3 (239 aa).

N5-methylglutamine is present on Gln151.

It belongs to the universal ribosomal protein uL3 family. In terms of assembly, part of the 50S ribosomal subunit. Forms a cluster with proteins L14 and L19. Methylated by PrmB.

One of the primary rRNA binding proteins, it binds directly near the 3'-end of the 23S rRNA, where it nucleates assembly of the 50S subunit. The chain is Large ribosomal subunit protein uL3 from Ruegeria sp. (strain TM1040) (Silicibacter sp.).